A 323-amino-acid polypeptide reads, in one-letter code: tRNA-modifying protein YgfZ (323 aa).

Residues Trp29 and Trp182 each contribute to the folate site.

This sequence belongs to the tRNA-modifying YgfZ family.

It is found in the cytoplasm. In terms of biological role, folate-binding protein involved in regulating the level of ATP-DnaA and in the modification of some tRNAs. It is probably a key factor in regulatory networks that act via tRNA modification, such as initiation of chromosomal replication. The protein is tRNA-modifying protein YgfZ of Vibrio atlanticus (strain LGP32) (Vibrio splendidus (strain Mel32)).